A 589-amino-acid chain; its full sequence is Probable translation initiation factor IF-2 (589 aa).

Residues 14–229 (LRQPIVCVLG…LAGLAQRFLE (216 aa)) enclose the tr-type G domain. The interval 23–30 (GHVDHGKT) is G1. GTP is bound at residue 23-30 (GHVDHGKT). The interval 48–52 (GITQR) is G2. The interval 84–87 (DTPG) is G3. GTP-binding positions include 84–88 (DTPGH) and 138–141 (NKID). The segment at 138–141 (NKID) is G4. Residues 206–208 (SAK) are G5.

The protein belongs to the TRAFAC class translation factor GTPase superfamily. Classic translation factor GTPase family. IF-2 subfamily.

Functionally, function in general translation initiation by promoting the binding of the formylmethionine-tRNA to ribosomes. Seems to function along with eIF-2. The chain is Probable translation initiation factor IF-2 (infB) from Thermoplasma acidophilum (strain ATCC 25905 / DSM 1728 / JCM 9062 / NBRC 15155 / AMRC-C165).